A 189-amino-acid polypeptide reads, in one-letter code: Peptidyl-tRNA hydrolase (189 aa).

Position 16 (Y16) interacts with tRNA. Catalysis depends on H21, which acts as the Proton acceptor. Positions 67, 69, and 115 each coordinate tRNA.

The protein belongs to the PTH family. Monomer.

The protein localises to the cytoplasm. It carries out the reaction an N-acyl-L-alpha-aminoacyl-tRNA + H2O = an N-acyl-L-amino acid + a tRNA + H(+). In terms of biological role, hydrolyzes ribosome-free peptidyl-tRNAs (with 1 or more amino acids incorporated), which drop off the ribosome during protein synthesis, or as a result of ribosome stalling. Functionally, catalyzes the release of premature peptidyl moieties from peptidyl-tRNA molecules trapped in stalled 50S ribosomal subunits, and thus maintains levels of free tRNAs and 50S ribosomes. The polypeptide is Peptidyl-tRNA hydrolase (Legionella pneumophila subsp. pneumophila (strain Philadelphia 1 / ATCC 33152 / DSM 7513)).